The chain runs to 142 residues: Large ribosomal subunit protein uL13 (142 aa).

This sequence belongs to the universal ribosomal protein uL13 family. In terms of assembly, part of the 50S ribosomal subunit.

This protein is one of the early assembly proteins of the 50S ribosomal subunit, although it is not seen to bind rRNA by itself. It is important during the early stages of 50S assembly. The sequence is that of Large ribosomal subunit protein uL13 from Burkholderia mallei (strain NCTC 10247).